The chain runs to 465 residues: Protein Loquacious (465 aa).

Residues M1–E337 form a necessary for enhancing pre-miRNA processing by Dcr-1 region. Residues M1–L379 form a not required for interaction with Dcr-1 region. The tract at residues M1–I392 is important for homodimerization and interaction with Dcr-1. The sufficient for binding RNA stretch occupies residues N129–E211. The interval N129–D322 is necessary for promoting preferential binding of Dcr-2 to the less stably base paired ends of siRNAs. Residues T135–G206 form the DRBM 1 domain. Positions L209 to G249 are enables simultaneous binding of both DRBM 1 and 2 domains to dsRNA. The disordered stretch occupies residues P210–K246. Residues E211–G223 are compositionally biased toward polar residues. The interval S220 to K465 is necessary and sufficient for enhancing processing of pre-miRNAs by Dcr-1. Residues G228–D242 show a composition bias toward gly residues. The sufficient for binding RNA stretch occupies residues D245 to D322. Residues N250–E318 form the DRBM 2 domain. The necessary for binding pre-miRNA stretch occupies residues A308–A309. The required for binding to Dcr-2 and to fully enhance Dcr-2 mediated cleavage of 3' overhanging termini (3'ovr) and blunt termini (BLT) dsRNAs. However, this region is dispensable for binding the dsRNA substrates stretch occupies residues P338–Q359. The interval S340–K465 is necessary for interaction with Dcr-1. A sufficent for binding to Dcr-1 region spans residues I392–T463. The 69-residue stretch at D393–I461 folds into the DRBM 3 domain.

As to quaternary structure, homodimer. Interacts with dicer enzyme Dcr-1. In terms of assembly, component of the miRNA-directed RNA-induced loading complex (miRLC), composed of at least Dcr-1, AGO1 and loqs isoform PB (loqs-PB), which processes pre-miRNAs and loads the resulting miRNAs into the Argonaute 1 (AGO1)-containing RNA-induced silencing complex (miRISC) to target the selective destruction of homologous RNAs. Interacts (via DRBM 3 domain) with dicer enzyme Dcr-1 (via helicase domain). Different regions of the Dcr-1-loqs-PB heterodimer collaborate to recognize, bind and position the pre-miRNA for Dcr-1 mediated cleavage. In the absence of miRNA substrates, the heterodimer favors a closed, catalytically incompetent, conformation, whereas binding of authentic pre-miRNA substrates stabilizes the relatively rare open, catalytically competent, conformation of the heterodimer. During substrate recognition, the Dcr-1 PAZ domain and pre-miRNA interact with the DRBM 1 domain of loqs-PB, which likely contributes to substrate recognition and stabilization. At the miRNA binding stage, the Dcr-1 DRBM domain and the loqs-PB DRBM domains then bind the pre-miRNA in tandem to form a tight 'belt' around the pre-miRNA stem, the pre-miRNA loop is docked in the loop-binding region formed by DUF283, DRBM and part of the helicase domain of Dcr-1, and the loqs-PB DRBM 1 and the wing domain of Dcr-1 act together to bind the 5' and 3' pre-miRNA termini within the PAZ and platform domains of Dcr-1. These interactions between the proteins and their pre-miRNA substrate stabilize a distorted form of the pre-miRNA and position the scissile phosphodiester bonds of the pre-miRNA at the RNase III catalytic cleavage sites of Dcr-1. Following Dcr-1 mediated cleavage, the miRNA duplex remains bound to loqs-PB DRBM 1, which dissociates from the Dcr-1 RNase III 1 domain but remains in contact with the PAZ and wing domains suggesting that the heterodimer presents the mature miRNA to AGO2 for loading into the RNA-induced silencing complex (miRISC). As to quaternary structure, able to interact with dicer enzyme Dcr-1. However, the relevance of such an interaction is unclear in vivo and another report found that it did not interact with Dcr-1. Monomer. Interacts (via C-terminus) with dicer enzyme Dcr-2 (via N-terminus); interaction is required for RNAi activity in producing siRNAs from a subset of endo- and exo-dsRNAs, and in the alternative siRLC, the interaction enhances the binding preference of the protein for the thermodynamically more stable ends of endogenous siRNAs. Interaction with Dcr-2 is RNA independent, however the isoform must bind both dsRNA and Dcr-2 to enhance Dcr-2 cleavage activity. Does not interact with Dcr-1. In terms of tissue distribution, strong expression in males and females. Expression in ovaries is relatively weak. Strong expression in females and relatively weak expression in males. Strong expression in ovaries.

It localises to the cytoplasm. Its subcellular location is the cytosol. In terms of biological role, double-stranded RNA-binding protein which can function in gene silencing by acting with Dcr-1 to enhance its ATP-independent processing of a specific subset of precursor micro-RNAs (pre-miRNAs) to mature miRNAs. Some reports found it was able to enhance the efficiency of pre-miRNA processing by Dcr-1, and can shift the cleavage site of Dcr-1 altering the length of the mature miRNAs produced by Dcr-1 alone. However, in contrast to isoform PB, it is not necessary or sufficient for enhancing miRNA biogenesis, and is not required for development or female germline stem cell (GSC) maintenance. Another report also found that it decreases binding of Dcr-1 to the miRNA substrate let-7. Double-stranded RNA-binding protein which functions in gene silencing by acting with Dcr-1 to enhance its ATP-independent processing of a specific subset of precursor micro-RNAs (pre-miRNAs) to mature miRNAs. Function is essential for development and female germline stem cell (GSC) maintenance. Functions in miRNA-mediated gene silencing by enhancing the binding affinity and specific pre-miRNA processing activity of Dcr-1, and as part of the loqs-PB-Dcr-1 complex, is involved in substrate discrimination, correctly positioning the pre-miRNA in the Dcr-1 catalytic center for cleavage, and miRNA loading into the Argonaute 1 (Ago1)-containing RNA-induced silencing complex (miRISC). Increases the binding affinity of Dcr-1 to pre-miRNAs, thereby increasing dicing efficiency and broadening the range of substrates that can be processed by the dicer. It may also confer the substrate specificity of Dcr-1 towards pre-miRNAs, as in its absence Dcr-1 displays siRNA-generating activity towards long dsRNA substrates. It can also shift the cleavage site of Dcr-1 for a small number of pre-miRNAs, changing the length of the mature miRNAs produced by Dcr-1 alone. Increases the range of pre-miRNAs that can be processed by Dcr-1, by enhancing the dicing of suboptimal hairpin substrates including ones with mismatches at the dicing site. This function may also promote the generation of novel miRNA genes as it appears to have an important role in processing evolutionarily young miRNA genes, suggesting that it may also enhance dicing of substrates that have not acquired hairpin features required for efficient miRNA processing. As newly emerged miRNAs can have deleterious or beneficial effects on fitness, this function is likely part of a regulatory system that prevents excessive emergence of active miRNA genes and thus keeps them within an optimal range. Also forms a RISC loading complex (miRLC) with Dcr-1 to mediate Ago1-loading of mature miRNAs into the RNA-induced silencing complex (miRISC). In female ovaries, required for Dcr-1 to generate the twenty-three nucleotide isomiR variant of miR-307a which is able to repress its targets Gk2 and tara. Its function is as follows. Double-stranded RNA-binding protein which has an essential role in gene silencing (RNAi) by acting with Dcr-2 to enhance its ATP-dependent processing of a subset of endogenous (endo) and exogenous (exo) dsRNAs into short interfering RNAs (siRNAs). Functions in RNAi by increasing the initial binding affinity of Dcr-2 to certain dsRNA substrates, and in the absence of r2d2, may also function in siRNA loading into the Argonaute 2 (AGO2)-containing RNA-induced silencing complex (siRISC) and guide strand selection for target silencing by the siRISC. Promotes Dcr-2 cleavage of a subset of dsRNAs, including endo-dsRNAs derived from convergent transcription, inverted repeats and transposons. Also enables Dcr-2 to produce hairpin-derived endo-siRNAs in the presence of cellular inhibitory inorganic phosphate, likely by increasing the binding affinity of the enzyme to the hairpin dsRNAs allowing the dsRNA to displace phosphate bound to Dcr-2. According to many reports, the cleavage reaction mode of Dcr-2 changes according to the termini of the dsRNA substrate, with the enzyme displaying a preference for processing blunt termini (BLT), likely non-self dsRNAs, over dsRNAs with 2 nucleotides 3' overhanging (3'ovr) termini, which are typically the structure of endo-dsRNAs. According to many reports, interaction with Loqs-PD modifies the molecular recognition mechanisms of Dcr-2 towards sub-optimal 3'ovr dsRNA substrates and thus enables the dicer to cleave endo-dsRNA templates with diverse termini. However, according to another report, the mode of cleavage reaction is not affected by the presence or absence of loqs-PD. In the absence of r2d2, may also form an alternative RISC loading complex (siRLC) with Dcr-2 to mediate AGO2-loading of endo- and exo-siRNAs into the RNA-induced silencing complex (siRISC). Many reports suggest that loqs-PD and r2d2 function independently with dcr-2 in distinct siRNA pathways, and may even compete for binding to the enzyme. Loaded siRNAs serve as a guide to direct the siRISC to complementary RNAs to degrade them or prevent their translation. The siRLC plays an important role in the ATP-dependent asymmetry sensing of the duplex, and is therefore also responsible for the selection of the strand that ultimately acts as the guide siRNA for the siRISC. Thermodynamically asymmetric endo-siRNAs can be pre-oriented in the siRLC by the Loqs-PD and DCr-2 complex, which preferentially binds to the most thermodynamically stable strand prior to loading into the siRISC. Appears to be involved in promoting double-strand breaks (DSBs) following exposure to a low-dose/dose-rate (LDR) of ionizing radiation. The chain is Protein Loquacious from Drosophila melanogaster (Fruit fly).